The following is a 434-amino-acid chain: Glutamyl-tRNA reductase (434 aa).

Substrate contacts are provided by residues 49 to 52 (TCNR), Ser109, 114 to 116 (EPQ), and Gln120. Cys50 (nucleophile) is an active-site residue. 189-194 (GAGEMC) is an NADP(+) binding site.

This sequence belongs to the glutamyl-tRNA reductase family. In terms of assembly, homodimer.

The enzyme catalyses (S)-4-amino-5-oxopentanoate + tRNA(Glu) + NADP(+) = L-glutamyl-tRNA(Glu) + NADPH + H(+). It participates in porphyrin-containing compound metabolism; protoporphyrin-IX biosynthesis; 5-aminolevulinate from L-glutamyl-tRNA(Glu): step 1/2. Its function is as follows. Catalyzes the NADPH-dependent reduction of glutamyl-tRNA(Glu) to glutamate 1-semialdehyde (GSA). The sequence is that of Glutamyl-tRNA reductase from Citrifermentans bemidjiense (strain ATCC BAA-1014 / DSM 16622 / JCM 12645 / Bem) (Geobacter bemidjiensis).